A 367-amino-acid chain; its full sequence is MAHADLATEQSLRSEIDRTDHNRRQIRGWLAVVLFALFALVIVGGATRLTESGLSITEWKPIHGVIPPLSAEEWEEEFRLYQRIPQYEQMNKGMTVEAFKTIFWWEWAHRLLARSIGVIFALPLLFFWLTGRVERRLRLPLLGILALGGFQGFIGWWMVSSGLVERTEVSQYRLATHLVIACLIFAACMWIYRGLSPHTGDAAPTQRSQTMAGIIAAMSLFQIYLGALVAGLDAGLSYNTWPLMDGAIVPGDLFVQQPAWINLFENPKTVQFLHRAGAYLLFALAFAHMVVSLRAASGTTHARRSVLLFVLLTVQAAIGITTLLLQVPIVWGVLHQAGALVVLGFAIAHWRGFVGEYPRPAAIEVRH.

The next 5 helical transmembrane spans lie at 26–46, 111–131, 139–159, 174–194, and 212–232; these read IRGW…VGGA, LLAR…WLTG, LPLL…WWMV, LATH…IYRG, and AGII…VAGL. H274 is a heme binding site. 3 helical membrane-spanning segments follow: residues 276-296, 305-325, and 327-347; these read AGAY…LRAA, SVLL…TLLL, and VPIV…GFAI. H335 is a heme binding site.

The protein belongs to the COX15/CtaA family. Type 2 subfamily. As to quaternary structure, interacts with CtaB. Requires heme b as cofactor.

Its subcellular location is the cell membrane. The enzyme catalyses Fe(II)-heme o + 2 A + H2O = Fe(II)-heme a + 2 AH2. It participates in porphyrin-containing compound metabolism; heme A biosynthesis; heme A from heme O: step 1/1. Functionally, catalyzes the conversion of heme O to heme A by two successive hydroxylations of the methyl group at C8. The first hydroxylation forms heme I, the second hydroxylation results in an unstable dihydroxymethyl group, which spontaneously dehydrates, resulting in the formyl group of heme A. This Sinorhizobium fredii (strain NBRC 101917 / NGR234) protein is Heme A synthase.